A 362-amino-acid polypeptide reads, in one-letter code: Olfactory receptor 5AU1 (362 aa).

The Extracellular segment spans residues 1–79; it reads MTEFHLQSQM…TDPQLQRLLF (79 aa). An N-linked (GlcNAc...) asparagine glycan is attached at Asn-56. A helical membrane pass occupies residues 80 to 100; the sequence is VVFLGMYTATLLGNLVMFLLI. The Cytoplasmic portion of the chain corresponds to 101-116; the sequence is HVSATLHTPMYSLLKS. Residues 117–139 traverse the membrane as a helical segment; that stretch reads LSFLDFCYSSTVVPQTLVNFLAK. Residues 140–150 lie on the Extracellular side of the membrane; sequence RKVISYFGCMT. A disulfide bridge links Cys-148 with Cys-230. The helical transmembrane segment at 151-171 threads the bilayer; it reads QMFFYAGFATSECYLIAAMAY. Residues 172 to 194 are Cytoplasmic-facing; that stretch reads DRYAAICNPLLYSTIMSPEVCAS. A helical transmembrane segment spans residues 195–215; that stretch reads LIVGSYSAGFLNSLIHTGCIF. At 216 to 247 the chain is on the extracellular side; the sequence is SLKFCGAHVVTHFFCDGPPILSLSCVDTSLCE. The chain crosses the membrane as a helical span at residues 248 to 268; it reads ILLFIFAGFNLLSCTLTILIS. At 269-290 the chain is on the cytoplasmic side; it reads YFLILNTILKMSSAQGRFKAFS. A helical membrane pass occupies residues 291 to 311; the sequence is TCASHLTAICLFFGTTLFMYL. Over 312 to 322 the chain is Extracellular; the sequence is RPRSSYSLTQD. The chain crosses the membrane as a helical span at residues 323-343; sequence RTVAVIYTVVIPVLNPLMYSL. Residues 344 to 362 lie on the Cytoplasmic side of the membrane; that stretch reads RNKDVKKALIKVWGRKTME.

It belongs to the G-protein coupled receptor 1 family.

It localises to the cell membrane. Odorant receptor. The chain is Olfactory receptor 5AU1 (OR5AU1) from Homo sapiens (Human).